Consider the following 278-residue polypeptide: Phosphonates import ATP-binding protein PhnC 2 (278 aa).

The ABC transporter domain occupies 5–253 (IRVDSLNKTF…FLNELYGAEG (249 aa)). 37 to 44 (GASGSGKS) contributes to the ATP binding site.

This sequence belongs to the ABC transporter superfamily. Phosphonates importer (TC 3.A.1.9.1) family. In terms of assembly, the complex is composed of two ATP-binding proteins (PhnC), two transmembrane proteins (PhnE) and a solute-binding protein (PhnD).

It is found in the cell inner membrane. It catalyses the reaction phosphonate(out) + ATP + H2O = phosphonate(in) + ADP + phosphate + H(+). Its function is as follows. Part of the ABC transporter complex PhnCDE involved in phosphonates import. Responsible for energy coupling to the transport system. The chain is Phosphonates import ATP-binding protein PhnC 2 from Pseudomonas aeruginosa (strain ATCC 15692 / DSM 22644 / CIP 104116 / JCM 14847 / LMG 12228 / 1C / PRS 101 / PAO1).